We begin with the raw amino-acid sequence, 344 residues long: Biotin synthase (344 aa).

Residues 40–267 (AEVQVSTLLS…KSMVRLSAGR (228 aa)) form the Radical SAM core domain. [4Fe-4S] cluster is bound by residues Cys-55, Cys-59, and Cys-62. 4 residues coordinate [2Fe-2S] cluster: Cys-99, Cys-130, Cys-190, and Arg-262.

The protein belongs to the radical SAM superfamily. Biotin synthase family. In terms of assembly, homodimer. Requires [4Fe-4S] cluster as cofactor. [2Fe-2S] cluster is required as a cofactor.

The enzyme catalyses (4R,5S)-dethiobiotin + (sulfur carrier)-SH + 2 reduced [2Fe-2S]-[ferredoxin] + 2 S-adenosyl-L-methionine = (sulfur carrier)-H + biotin + 2 5'-deoxyadenosine + 2 L-methionine + 2 oxidized [2Fe-2S]-[ferredoxin]. The protein operates within cofactor biosynthesis; biotin biosynthesis; biotin from 7,8-diaminononanoate: step 2/2. In terms of biological role, catalyzes the conversion of dethiobiotin (DTB) to biotin by the insertion of a sulfur atom into dethiobiotin via a radical-based mechanism. This is Biotin synthase from Xanthomonas oryzae pv. oryzae (strain PXO99A).